Reading from the N-terminus, the 27-residue chain is uncharacterized protein (27 aa).

Residues 3–23 (IILWAVLIIFLIGLLVVTGVF) form a helical membrane-spanning segment.

The protein resides in the cell inner membrane. This is an uncharacterized protein from Escherichia coli (strain K12).